Consider the following 225-residue polypeptide: Cytochrome b6-f complex iron-sulfur subunit, chloroplastic (225 aa).

The transit peptide at 1 to 46 (MASTALSTASNPTQLCRSRASLGKPVKGLGFGRERVPRTATTITCQ) directs the protein to the chloroplast. The helical transmembrane segment at 69–89 (LLGAISLPTVGMLVPYGAFFI) threads the bilayer. Residues 112–208 (AEEWLKTHGP…ADVDDGKVLF (97 aa)) enclose the Rieske domain. [2Fe-2S] cluster-binding residues include C154, H156, C172, and H175. A disulfide bridge links C159 with C174.

It belongs to the Rieske iron-sulfur protein family. In terms of assembly, the 4 large subunits of the cytochrome b6-f complex are cytochrome b6, subunit IV (17 kDa polypeptide, petD), cytochrome f and the Rieske protein, while the 4 small subunits are petG, petL, petM and petN. The complex functions as a dimer. Requires [2Fe-2S] cluster as cofactor.

It is found in the plastid. The protein localises to the chloroplast thylakoid membrane. It catalyses the reaction 2 oxidized [plastocyanin] + a plastoquinol + 2 H(+)(in) = 2 reduced [plastocyanin] + a plastoquinone + 4 H(+)(out). Functionally, component of the cytochrome b6-f complex, which mediates electron transfer between photosystem II (PSII) and photosystem I (PSI), cyclic electron flow around PSI, and state transitions. This chain is Cytochrome b6-f complex iron-sulfur subunit, chloroplastic (petC), found in Oryza sativa subsp. japonica (Rice).